A 696-amino-acid polypeptide reads, in one-letter code: C2 domain-containing protein 2 (696 aa).

A helical transmembrane segment spans residues 13 to 33 (AQWLALVSLFVAALATVGLYL). The region spanning 51–242 (EPGEGPRPGS…PTTVKEAQNL (192 aa)) is the SMP-LBD domain. Ser-60 bears the Phosphoserine mark. Positions 245 to 362 (AASTAQESCP…KKQPSGPQSF (118 aa)) constitute a C2 domain. 2 positions are modified to phosphoserine: Ser-435 and Ser-441. Thr-445 carries the phosphothreonine modification. Residues 539–580 (VDSTHQEDAPSHPERAAASAPPEEAESAQASLAPKPQEDELD) are disordered. Residues 542–553 (THQEDAPSHPER) show a composition bias toward basic and acidic residues. Positions 554–572 (AAASAPPEEAESAQASLAP) are enriched in low complexity. Ser-581 carries the phosphoserine modification.

It is found in the membrane. The protein is C2 domain-containing protein 2 (C2CD2) of Homo sapiens (Human).